Reading from the N-terminus, the 852-residue chain is Taste receptor type 1 member 3 (852 aa).

Residues 1–20 (MLGPAVLGLSLWALLHPGTG) form the signal peptide. The Extracellular segment spans residues 21–570 (APLCLSQQLR…FLAWGEPAVL (550 aa)). Asparagine 85, asparagine 130, asparagine 264, asparagine 285, asparagine 380, asparagine 411, asparagine 432, and asparagine 475 each carry an N-linked (GlcNAc...) asparagine glycan. The tract at residues 536–545 (IACTFCGQDE) is required for brazzein responsiveness. A helical transmembrane segment spans residues 571–591 (LLLLLLSLALGLVLAALGLFV). Topologically, residues 592–603 (HHRDSPLVQASG) are cytoplasmic. The chain crosses the membrane as a helical span at residues 604-624 (GPLACFGLVCLGLVCLSVLLF). Residues 625-639 (PGQPSPARCLAQQPL) are Extracellular-facing. Residues 640–660 (SHLPLTGCLSTLFLQAAEIFV) traverse the membrane as a helical segment. Residues 661–682 (ESELPLSWADRLSGCLRGPWAW) lie on the Cytoplasmic side of the membrane. A helical membrane pass occupies residues 683 to 703 (LVVLLAMLVEVALCTWYLVAF). The Extracellular segment spans residues 704–729 (PPEVVTDWHMLPTEALVHCRTRSWVS). A helical membrane pass occupies residues 730–750 (FGLAHATNATLAFLCFLGTFL). At 751 to 762 (VRSQPGCYNRAR) the chain is on the cytoplasmic side. Residues 763 to 783 (GLTFAMLAYFITWVSFVPLLA) traverse the membrane as a helical segment. The Extracellular portion of the chain corresponds to 784–789 (NVQVVL). Residues 790 to 810 (RPAVQMGALLLCVLGILAAFH) traverse the membrane as a helical segment. Residues 811 to 852 (LPRCYLLMRQPGLNTPEFFLGGGPGDAQGQNDGNTGNQGKHE) are Cytoplasmic-facing.

This sequence belongs to the G-protein coupled receptor 3 family. TAS1R subfamily. In terms of assembly, forms homodimers or heterodimers with TAS1R1 and TAS1R2.

Its subcellular location is the cell membrane. Putative taste receptor. TAS1R1/TAS1R3 responds to the umami taste stimulus (the taste of monosodium glutamate). TAS1R2/TAS1R3 recognizes diverse natural and synthetic sweeteners. TAS1R3 is essential for the recognition and response to the disaccharide trehalose. Sequence differences within and between species can significantly influence the selectivity and specificity of taste responses. This Homo sapiens (Human) protein is Taste receptor type 1 member 3 (TAS1R3).